Consider the following 278-residue polypeptide: MIEPFKVKDVEIGGPKLFLIAGPCVIESEAHAMKMAEAISGVCKAMKIPYIFKASYDKANRTSLSSFRGPGLHEGLRILAKVADEVNVPVLTDVHDTEQATAAGDIVDVLQIPAFLCRQTDLLVAAAKTGKVVNVKKGQFVAPNDMQYAVTKVRESGNQRVCLTERGASFGYNNLVVDMRALPIMRQFAPVIFDATHSVQLPSAGKDGHAVSGGQPEFIPVLSRAAVAAGVDGVFMEVHDDPPHAKSDGANALDLKLLRGVLTSLLRIREAVTPPAAS.

The protein belongs to the KdsA family.

The protein localises to the cytoplasm. It carries out the reaction D-arabinose 5-phosphate + phosphoenolpyruvate + H2O = 3-deoxy-alpha-D-manno-2-octulosonate-8-phosphate + phosphate. Its pathway is carbohydrate biosynthesis; 3-deoxy-D-manno-octulosonate biosynthesis; 3-deoxy-D-manno-octulosonate from D-ribulose 5-phosphate: step 2/3. It functions in the pathway bacterial outer membrane biogenesis; lipopolysaccharide biosynthesis. This is 2-dehydro-3-deoxyphosphooctonate aldolase from Koribacter versatilis (strain Ellin345).